Here is a 68-residue protein sequence, read N- to C-terminus: uncharacterized protein (68 aa).

This is an uncharacterized protein from Feline immunodeficiency virus (strain San Diego) (FIV).